A 414-amino-acid chain; its full sequence is Glutamyl-tRNA reductase (414 aa).

Substrate-binding positions include 49–52 (TCNR), S108, 113–115 (EPQ), and Q119. Catalysis depends on C50, which acts as the Nucleophile. 188–193 (GAGQTG) lines the NADP(+) pocket.

This sequence belongs to the glutamyl-tRNA reductase family. In terms of assembly, homodimer.

It carries out the reaction (S)-4-amino-5-oxopentanoate + tRNA(Glu) + NADP(+) = L-glutamyl-tRNA(Glu) + NADPH + H(+). The protein operates within porphyrin-containing compound metabolism; protoporphyrin-IX biosynthesis; 5-aminolevulinate from L-glutamyl-tRNA(Glu): step 1/2. Its function is as follows. Catalyzes the NADPH-dependent reduction of glutamyl-tRNA(Glu) to glutamate 1-semialdehyde (GSA). The polypeptide is Glutamyl-tRNA reductase (Francisella tularensis subsp. tularensis (strain WY96-3418)).